We begin with the raw amino-acid sequence, 699 residues long: Elongation factor G (699 aa).

Residues 10-292 (NRTRNIGIMA…AVIDYLPSPT (283 aa)) enclose the tr-type G domain. Residues 19-26 (AHIDAGKT), 90-94 (DTPGH), and 144-147 (NKMD) each bind GTP. Residues 292-312 (TDVPAIRGEEDDGSEGSRSAS) form a disordered region.

The protein belongs to the TRAFAC class translation factor GTPase superfamily. Classic translation factor GTPase family. EF-G/EF-2 subfamily.

It localises to the cytoplasm. Catalyzes the GTP-dependent ribosomal translocation step during translation elongation. During this step, the ribosome changes from the pre-translocational (PRE) to the post-translocational (POST) state as the newly formed A-site-bound peptidyl-tRNA and P-site-bound deacylated tRNA move to the P and E sites, respectively. Catalyzes the coordinated movement of the two tRNA molecules, the mRNA and conformational changes in the ribosome. This Coxiella burnetii (strain RSA 331 / Henzerling II) protein is Elongation factor G.